An 89-amino-acid chain; its full sequence is UPF0297 protein SUB1776 (89 aa).

This sequence belongs to the UPF0297 family.

In Streptococcus uberis (strain ATCC BAA-854 / 0140J), this protein is UPF0297 protein SUB1776.